The primary structure comprises 257 residues: tRNA pseudouridine synthase A (257 aa).

The Nucleophile role is filled by Asp-57. Tyr-115 is a substrate binding site.

Belongs to the tRNA pseudouridine synthase TruA family. Homodimer.

The catalysed reaction is uridine(38/39/40) in tRNA = pseudouridine(38/39/40) in tRNA. Its function is as follows. Formation of pseudouridine at positions 38, 39 and 40 in the anticodon stem and loop of transfer RNAs. This Lawsonia intracellularis (strain PHE/MN1-00) protein is tRNA pseudouridine synthase A.